The following is a 371-amino-acid chain: Cytochrome b (371 aa).

4 consecutive transmembrane segments (helical) span residues 25-45, 69-90, 105-125, and 170-190; these read FGSMLLTCLALQVLTGFFLAI, WMMQNLHAIGASMFFICIYIHI, WMSGITLLITLMATAFFGYVL, and FFALHFILPFAIISLSSLHII. Residues His75 and His89 each coordinate heme b. Residues His174 and His188 each contribute to the heme b site. A ubiquinone is bound at residue His193. The next 4 helical transmembrane spans lie at 218–238, 280–300, 312–332, and 339–358; these read HKDLLLLTFMILLLFTIVSFL, LGGALALVMSIMILFIIPFTH, LSQLMFWTLVSTFATITWAAT, and FIIISQTTSMLYFTFFLSTP.

Belongs to the cytochrome b family. As to quaternary structure, the cytochrome bc1 complex contains 3 respiratory subunits (MT-CYB, CYC1 and UQCRFS1), 2 core proteins (UQCRC1 and UQCRC2) and probably 6 low-molecular weight proteins. Heme b serves as cofactor.

It is found in the mitochondrion inner membrane. Component of the ubiquinol-cytochrome c reductase complex (complex III or cytochrome b-c1 complex) that is part of the mitochondrial respiratory chain. The b-c1 complex mediates electron transfer from ubiquinol to cytochrome c. Contributes to the generation of a proton gradient across the mitochondrial membrane that is then used for ATP synthesis. This chain is Cytochrome b (MT-CYB), found in Antaresia maculosa (Eastern small blotched python).